A 230-amino-acid chain; its full sequence is V-type proton ATPase subunit E (230 aa).

It belongs to the V-ATPase E subunit family. In terms of assembly, V-ATPase is a heteromultimeric enzyme composed of a peripheral catalytic V1 complex (components A to H) attached to an integral membrane V0 proton pore complex (components: a, c, c', c'', d, e, f and VOA1).

Its subcellular location is the vacuole membrane. In terms of biological role, subunit of the V1 complex of vacuolar(H+)-ATPase (V-ATPase), a multisubunit enzyme composed of a peripheral complex (V1) that hydrolyzes ATP and a membrane integral complex (V0) that translocates protons. V-ATPase is responsible for acidifying and maintaining the pH of intracellular compartments. This Neurospora crassa (strain ATCC 24698 / 74-OR23-1A / CBS 708.71 / DSM 1257 / FGSC 987) protein is V-type proton ATPase subunit E.